The following is a 1158-amino-acid chain: ATP-dependent helicase/deoxyribonuclease subunit B (1158 aa).

The UvrD-like helicase ATP-binding domain occupies 1–275 (MTLHAYLGRA…QYFNQLYRFN (275 aa)). Position 8-15 (8-15 (GRAGTGKS)) interacts with ATP. Residues 269 to 583 (NQLYRFNNQD…SIGTMDLAKV (315 aa)) form the UvrD-like helicase C-terminal domain. Positions 784, 1112, 1115, and 1121 each coordinate [4Fe-4S] cluster.

The protein belongs to the helicase family. AddB/RexB type 1 subfamily. In terms of assembly, heterodimer of AddA and AddB. Mg(2+) is required as a cofactor. It depends on [4Fe-4S] cluster as a cofactor.

The heterodimer acts as both an ATP-dependent DNA helicase and an ATP-dependent, dual-direction single-stranded exonuclease. Recognizes the chi site generating a DNA molecule suitable for the initiation of homologous recombination. The AddB subunit has 5' -&gt; 3' nuclease activity but not helicase activity. This is ATP-dependent helicase/deoxyribonuclease subunit B from Staphylococcus aureus (strain MRSA252).